We begin with the raw amino-acid sequence, 475 residues long: Ribulose bisphosphate carboxylase large chain (475 aa).

Substrate is bound by residues Asn123 and Thr173. Lys175 functions as the Proton acceptor in the catalytic mechanism. Residue Lys177 coordinates substrate. 3 residues coordinate Mg(2+): Lys201, Asp203, and Glu204. Lys201 carries the N6-carboxylysine modification. Residue His294 is the Proton acceptor of the active site. Substrate contacts are provided by Arg295, His327, and Ser379.

This sequence belongs to the RuBisCO large chain family. Type I subfamily. Heterohexadecamer of 8 large chains and 8 small chains; disulfide-linked. The disulfide link is formed within the large subunit homodimers. Interacts with assembly factor Raf1 which helps form the holoenzyme, most interaction (and folding) occurs in the cytoplasm. Mg(2+) is required as a cofactor. Post-translationally, the disulfide bond which can form in the large chain dimeric partners within the hexadecamer appears to be associated with oxidative stress and protein turnover.

The protein localises to the carboxysome. It localises to the cytoplasm. The enzyme catalyses 2 (2R)-3-phosphoglycerate + 2 H(+) = D-ribulose 1,5-bisphosphate + CO2 + H2O. The catalysed reaction is D-ribulose 1,5-bisphosphate + O2 = 2-phosphoglycolate + (2R)-3-phosphoglycerate + 2 H(+). In terms of biological role, ruBisCO catalyzes two reactions: the carboxylation of D-ribulose 1,5-bisphosphate, the primary event in carbon dioxide fixation, as well as the oxidative fragmentation of the pentose substrate in the photorespiration process. Both reactions occur simultaneously and in competition at the same active site. This is Ribulose bisphosphate carboxylase large chain from Thermosynechococcus vestitus (strain NIES-2133 / IAM M-273 / BP-1).